The sequence spans 434 residues: Putative peptidase B (434 aa).

2 residues coordinate Mn(2+): Lys-198 and Asp-203. Lys-210 is an active-site residue. Mn(2+) contacts are provided by Asp-221, Asp-280, and Glu-282. Arg-284 is an active-site residue.

It belongs to the peptidase M17 family. Homohexamer. Mn(2+) serves as cofactor.

The protein resides in the cytoplasm. The enzyme catalyses Release of an N-terminal amino acid, Xaa, from a peptide or arylamide. Xaa is preferably Glu or Asp but may be other amino acids, including Leu, Met, His, Cys and Gln.. Functionally, probably plays an important role in intracellular peptide degradation. In Haemophilus influenzae (strain ATCC 51907 / DSM 11121 / KW20 / Rd), this protein is Putative peptidase B.